Here is a 363-residue protein sequence, read N- to C-terminus: Flagellar P-ring protein 2 (363 aa).

The signal sequence occupies residues 1-20 (MKLRTCCISLMLLLALPLQA).

Belongs to the FlgI family. The basal body constitutes a major portion of the flagellar organelle and consists of four rings (L,P,S, and M) mounted on a central rod.

It is found in the periplasm. The protein resides in the bacterial flagellum basal body. In terms of biological role, assembles around the rod to form the L-ring and probably protects the motor/basal body from shearing forces during rotation. The protein is Flagellar P-ring protein 2 of Photobacterium profundum (strain SS9).